The sequence spans 390 residues: Isotocin receptor (390 aa).

Residues 1 to 48 (MEEMFKEQDFWSFNESSRNSTVGNETFGGNQTVNPLKRNEEVAKVEVT) are Extracellular-facing. N-linked (GlcNAc...) asparagine glycosylation is found at Asn-14, Asn-19, Asn-24, and Asn-30. Residues 49-69 (VLALVLFLALAGNLCVLIAIY) traverse the membrane as a helical segment. The Cytoplasmic segment spans residues 70 to 86 (TAKHTQSRMYYLMKHLS). A helical transmembrane segment spans residues 87-107 (IADLVVAVFQVLPQLIWDITF). Residues 108-124 (RFYGPDFLCRLVKYLQT) are Extracellular-facing. A disulfide bridge connects residues Cys-116 and Cys-191. The helical transmembrane segment at 125–145 (VGMFASTYMLVLMSIDRCIAI) threads the bilayer. Over 146–160 (CQPLRSLHKRKDRCY) the chain is Cytoplasmic. The helical transmembrane segment at 161-181 (VIVSWALSLVFSVPQVYIFSL) threads the bilayer. The Extracellular segment spans residues 182–206 (REIGNGVYDCWGDFVQPWGAKAYIT). Residues 207 to 227 (WISLTIYIIPVAILGGCYGLI) traverse the membrane as a helical segment. At 228–276 (SFKIWQNFKRKTKKDQCITLTTAASKANALARVSSVKLVSKAKITTVKM) the chain is on the cytoplasmic side. The chain crosses the membrane as a helical span at residues 277–297 (TFVIVLAYIVCWTPFFFVQMW). Topologically, residues 298–311 (SAWDPEAPREAMPF) are extracellular. The helical transmembrane segment at 312 to 332 (IISMLLASLNSCCNPWIYMFF) threads the bilayer. The Cytoplasmic portion of the chain corresponds to 333 to 390 (AGHLFHDLKQSLLCCSTLYLKSSQCRCDQEHDSRKSNCSTYVIKSTSSQRSITQSSIT).

It belongs to the G-protein coupled receptor 1 family. Vasopressin/oxytocin receptor subfamily. As to expression, expressed in brain, intestine, bladder, skeletal muscle, lateral line, gills and kidney.

The protein localises to the cell membrane. Functionally, binds to isotocin. Can also be activated by vasotocin, mesotocin, oxytocin and Arg-vasopressin, although these have lower potencies than isotocin. Produces an induction of membrane chloride currents indicating that it is coupled to the inositol phosphate/calcium pathway. This is Isotocin receptor from Catostomus commersonii (White sucker).